Reading from the N-terminus, the 307-residue chain is MLEKYLEISKEVSEALKENKPVVALESTIISHGMPYPKNAETALNVEKIIRDKGAIPATIAILNGKLKVGLTKDEIEYLGKKGKEVVKTSRRDIPFILAKKLDGATTVASTMIVANLAGIKVFGTGGIGGVHRGAQESFDISADLQELANTNVAVVCAGAKSILDIGLTLEYLETQGVPVVGFGTEELPAFYTRKSGFKVDYRVDTAKELAEALKAKWDLGLKGGMVVGNPIPEEYQMDYDTITKAINDAVKEAEEKGIKGKESTPFLLAKVKDITKGKSLEANIQLVYNNVAVASDLAIELSKLNK.

The active-site Proton donor is the glutamate 26. Substrate contacts are provided by lysine 88 and valine 108. Aspartate 140 is a Mn(2+) binding site. Residue 142-144 coordinates substrate; it reads SAD. The Nucleophile role is filled by lysine 161.

The protein belongs to the pseudouridine-5'-phosphate glycosidase family. Homotrimer. Requires Mn(2+) as cofactor.

It catalyses the reaction D-ribose 5-phosphate + uracil = psi-UMP + H2O. Functionally, catalyzes the reversible cleavage of pseudouridine 5'-phosphate (PsiMP) to ribose 5-phosphate and uracil. Functions biologically in the cleavage direction, as part of a pseudouridine degradation pathway. The chain is Pseudouridine-5'-phosphate glycosidase from Clostridium botulinum (strain Langeland / NCTC 10281 / Type F).